We begin with the raw amino-acid sequence, 145 residues long: Probable low molecular weight protein-tyrosine-phosphatase EpsP (145 aa).

Cys-9 functions as the Nucleophile in the catalytic mechanism. Residue Arg-15 is part of the active site. Residue Asp-114 is the Proton donor of the active site.

This sequence belongs to the low molecular weight phosphotyrosine protein phosphatase family.

The enzyme catalyses O-phospho-L-tyrosyl-[protein] + H2O = L-tyrosyl-[protein] + phosphate. Its pathway is glycan metabolism; exopolysaccharide biosynthesis. May be involved in assembly or function of the EPS I polymerization/export complex and/or the EpsB ATPase. Alternatively it may function in the removal of the terminal phosphate from C55-isoprenyl pyrophosphate in order to recycle the C55-isoprenyl phosphate lipid carrier used in the synthesis of polysaccharide repeat units. This Ralstonia nicotianae (strain ATCC BAA-1114 / GMI1000) (Ralstonia solanacearum) protein is Probable low molecular weight protein-tyrosine-phosphatase EpsP (epsP).